The sequence spans 235 residues: Small ribosomal subunit protein uS2 (235 aa).

The protein belongs to the universal ribosomal protein uS2 family.

This chain is Small ribosomal subunit protein uS2 (rpsB), found in Geobacillus stearothermophilus (Bacillus stearothermophilus).